Here is a 394-residue protein sequence, read N- to C-terminus: MEKILAINAGSSTLKWQLFEMPSETVIAKGMIDRLGLSDSVFTAKYGDNQKFKEVQDVTTHEMAATLLLTRLKELGIVSHLDEITGVGHRVVGGGEAFSDSMVINPVALDEINRLAEYAPLHNPTQAYYIKIFTALLPGVPQVAVFDTSFYSTLAPENYLYSIPQEYYQTFGARKYGAHGTSHRYVAHRAAEILGTPLESQKMITLHLGSGASITAVQDGHAVDTSMGFTPLAGITMGTRSGDIDVSLVAFLAKKLEITMPEMIDILNHKSGLLGISELSPDMRDLEETAATRPQSALALSIFVNRVVKYVGSYVALMNGIDTLVFTAGSGENGSELRADICKQLACFGVKLDEEKNNVRSQERIISADDSKVKVLIVPTNEELMIARDVMRLK.

Asparagine 8 is a Mg(2+) binding site. Lysine 15 serves as a coordination point for ATP. Arginine 90 provides a ligand contact to substrate. Aspartate 147 functions as the Proton donor/acceptor in the catalytic mechanism. Residues 207 to 211 (HLGSG) and 282 to 284 (DMR) contribute to the ATP site. A Mg(2+)-binding site is contributed by glutamate 382.

The protein belongs to the acetokinase family. Homodimer. Mg(2+) is required as a cofactor. It depends on Mn(2+) as a cofactor.

It localises to the cytoplasm. It catalyses the reaction acetate + ATP = acetyl phosphate + ADP. It participates in metabolic intermediate biosynthesis; acetyl-CoA biosynthesis; acetyl-CoA from acetate: step 1/2. In terms of biological role, catalyzes the formation of acetyl phosphate from acetate and ATP. Can also catalyze the reverse reaction. This is Acetate kinase 1 from Latilactobacillus sakei subsp. sakei (strain 23K) (Lactobacillus sakei subsp. sakei).